A 1603-amino-acid polypeptide reads, in one-letter code: Gag-Pol polyprotein (1603 aa).

The span at 128–141 shows a compositional bias: basic and acidic residues; that stretch reads VGETTVQRDAKMAP. The segment at 128–150 is disordered; it reads VGETTVQRDAKMAPEETATPKTV. Positions 172–175 match the PPXY motif motif; the sequence is PPPY. An LYPX(n)L motif motif is present at residues 180–184; sequence LYPSL. Residues 181 to 215 are disordered; sequence YPSLAGVGEQQGQGGDTPRGAEQPRAEPGHAGLAP. The short motif at 219-229 is the Nuclear export signal element; that stretch reads LTDWARIREEL. 2 consecutive CCHC-type zinc fingers follow at residues 507–524 and 533–550; these read RLCYTCGSPGHYQAQCPK and ERCQLCDGMGHNAKQCRR. Positions 544–571 are disordered; sequence NAKQCRRRDSNQGQRPGRGLSSGPWPVS. In terms of domain architecture, Peptidase A2 spans 609-690; that stretch reads ITALLDSGAD…VRGSILGRDC (82 aa). The active-site For protease activity; shared with dimeric partner is D614. Positions 750 to 938 constitute a Reverse transcriptase domain; it reads LQLGHIEPSL…PGVQYLGYKL (189 aa). Positions 815, 890, 891, 1158, 1192, 1213, and 1272 each coordinate Mg(2+). The 132-residue stretch at 1149 to 1280 folds into the RNase H type-1 domain; that stretch reads PVPGPTVFTD…ADSQATFQAY (132 aa). The Integrase-type zinc finger occupies 1280–1321; the sequence is YPLREAKDLHTTLHIGPRALSKACNISMQQAREVVQTCPHCN. Zn(2+) is bound by residues H1289, H1293, C1317, and C1320. In terms of domain architecture, Integrase catalytic spans 1333–1496; sequence RGLGPLQIWQ…TPVQKHWRPT (164 aa). Residues D1344, D1401, and E1437 each contribute to the Mg(2+) site. Residues 1502–1550 constitute a DNA-binding region (integrase-type); it reads PPVKIRIETGEWEKGWNVLVWGRGYAAVKNRDTDKVIWVPSRKVKPDIT. Residues 1548-1567 are involved in homooctamerization; sequence DITQKDEVTKKDEASPLFAG. Residues 1549 to 1561 are compositionally biased toward basic and acidic residues; sequence ITQKDEVTKKDEA. Residues 1549 to 1603 are disordered; sequence ITQKDEVTKKDEASPLFAGSSDWIPWGDEQEGLQEEAASNKQEGPGEDTLAANES.

Active as a homodimer. In terms of assembly, homodimer. Homomultimer. Homohexamer. As to quaternary structure, homodimer; further associates as a homooctamer. Heterodimer of alpha and beta subunits. Three forms of RT exist: alpha-alpha (alpha-Pol), beta-beta (beta-Pol), and alpha-beta, with the major form being the heterodimer. Both the polymerase and RNase H active sites are located in the alpha subunit of heterodimeric RT alpha-beta. Requires Mg(2+) as cofactor. Mn(2+) serves as cofactor. In terms of processing, specific enzymatic cleavages in vivo yield mature proteins. Capsid protein p27: The cleavage at the C-terminus is slowly trimmed by the viral protease, sometimes being cut internally thereby generating the short version of the capsid protein and a capsid protein C-terminally extended by 3 amino acids in a ratio of 2:1.

It localises to the virion. It catalyses the reaction DNA(n) + a 2'-deoxyribonucleoside 5'-triphosphate = DNA(n+1) + diphosphate. It carries out the reaction Endonucleolytic cleavage to 5'-phosphomonoester.. Capsid protein p27: Self-associates to form the irregular polyhedron core composed of hexamers and pentamers, that encapsulates the genomic RNA-nucleocapsid complex. Assembles as a tube in vitro. Binds to inositol hexakisphosphate (IP6), which allows the assembly of the polyhedral capsid. Its function is as follows. Plays a role in the oligomerization of the Gag polyprotein and in the stabilization of the immature particle. Essential layering element during tube assembly. Allows the cooperative binging of Gag to the host plasma membrane. In terms of biological role, binds strongly to viral nucleic acids and promotes their packaging. Plays a role in the maturation-stabilization of the viral dimeric RNA via highly structured zinc-binding motifs. Functionally, the aspartyl protease mediates proteolytic cleavages of Gag and Gag-Pol polyproteins during or shortly after the release of the virion from the plasma membrane. Cleavages take place as an ordered, step-wise cascade to yield mature proteins. This process is called maturation. Displays maximal activity during the budding process just prior to particle release from the cell. Catalyzes viral DNA integration into the host chromosome, by performing a series of DNA cutting and joining reactions. This recombination event is an essential step in the viral replication cycle. Has a strong preference for using the 3'-OH at the viral DNA end as a nucleophile. In Rous sarcoma virus subgroup B (strain Schmidt-Ruppin) (RSV-SR-B), this protein is Gag-Pol polyprotein (gag-pol).